Reading from the N-terminus, the 41-residue chain is Photosystem I reaction center subunit IX (41 aa).

A helical transmembrane segment spans residues Tyr-7–Ile-27.

Belongs to the PsaJ family.

The protein localises to the plastid. It is found in the chloroplast thylakoid membrane. May help in the organization of the PsaE and PsaF subunits. This Trieres chinensis (Marine centric diatom) protein is Photosystem I reaction center subunit IX.